The chain runs to 601 residues: Elongation factor 4 (601 aa).

The tr-type G domain maps to 7-189 (SNVRNFSIVA…AIVTRLPPPK (183 aa)). GTP is bound by residues 19 to 24 (DHGKST) and 136 to 139 (NKVD).

This sequence belongs to the TRAFAC class translation factor GTPase superfamily. Classic translation factor GTPase family. LepA subfamily.

Its subcellular location is the cell inner membrane. The enzyme catalyses GTP + H2O = GDP + phosphate + H(+). Functionally, required for accurate and efficient protein synthesis under certain stress conditions. May act as a fidelity factor of the translation reaction, by catalyzing a one-codon backward translocation of tRNAs on improperly translocated ribosomes. Back-translocation proceeds from a post-translocation (POST) complex to a pre-translocation (PRE) complex, thus giving elongation factor G a second chance to translocate the tRNAs correctly. Binds to ribosomes in a GTP-dependent manner. In Afipia carboxidovorans (strain ATCC 49405 / DSM 1227 / KCTC 32145 / OM5) (Oligotropha carboxidovorans), this protein is Elongation factor 4.